Here is a 198-residue protein sequence, read N- to C-terminus: Autophagy-related protein 33 (198 aa).

A run of 3 helical transmembrane segments spans residues 17–37 (VSLG…LPAL), 60–80 (PVLA…FLAP), and 86–106 (PYLL…ILIP). Residues 111–147 (APRRTASSAPRKSSRAKMEASYEVLGDAHSEPASDED) form a disordered region. Residues 112–121 (PRRTASSAPR) show a composition bias toward low complexity. Residues 126 to 142 (AKMEASYEVLGDAHSEP) show a composition bias toward basic and acidic residues. A helical transmembrane segment spans residues 171 to 191 (TAISALGFAMAVVGIWGDGAP).

Belongs to the ATG33 family.

Its subcellular location is the mitochondrion membrane. In terms of biological role, involved in the selective degradation of mitochondria via autophagy during starvation and at post-log phase. Autophagy is required for proper vegetative growth, asexual/sexual reproduction, and full virulence. Autophagy is particularly involved in the biosynthesis of deoxynivalenol (DON), an important virulence determinant. This is Autophagy-related protein 33 from Gibberella zeae (strain ATCC MYA-4620 / CBS 123657 / FGSC 9075 / NRRL 31084 / PH-1) (Wheat head blight fungus).